Reading from the N-terminus, the 273-residue chain is Formamidopyrimidine-DNA glycosylase (273 aa).

Catalysis depends on Pro2, which acts as the Schiff-base intermediate with DNA. Glu3 (proton donor) is an active-site residue. The active-site Proton donor; for beta-elimination activity is the Lys58. DNA-binding residues include His91, Arg109, and Arg154. The FPG-type zinc finger occupies 239–273 (FVYARTGEPCRICNAPVRQIVQGQRSTFYCPNCQK). The active-site Proton donor; for delta-elimination activity is Arg263.

This sequence belongs to the FPG family. Monomer. Requires Zn(2+) as cofactor.

The catalysed reaction is Hydrolysis of DNA containing ring-opened 7-methylguanine residues, releasing 2,6-diamino-4-hydroxy-5-(N-methyl)formamidopyrimidine.. The enzyme catalyses 2'-deoxyribonucleotide-(2'-deoxyribose 5'-phosphate)-2'-deoxyribonucleotide-DNA = a 3'-end 2'-deoxyribonucleotide-(2,3-dehydro-2,3-deoxyribose 5'-phosphate)-DNA + a 5'-end 5'-phospho-2'-deoxyribonucleoside-DNA + H(+). Functionally, involved in base excision repair of DNA damaged by oxidation or by mutagenic agents. Acts as a DNA glycosylase that recognizes and removes damaged bases. Has a preference for oxidized purines, such as 7,8-dihydro-8-oxoguanine (8-oxoG). Has AP (apurinic/apyrimidinic) lyase activity and introduces nicks in the DNA strand. Cleaves the DNA backbone by beta-delta elimination to generate a single-strand break at the site of the removed base with both 3'- and 5'-phosphates. This is Formamidopyrimidine-DNA glycosylase from Herminiimonas arsenicoxydans.